Here is a 308-residue protein sequence, read N- to C-terminus: Elongation factor Ts (308 aa).

Positions 80-83 are involved in Mg(2+) ion dislocation from EF-Tu; sequence TDFV.

This sequence belongs to the EF-Ts family.

Its subcellular location is the cytoplasm. Associates with the EF-Tu.GDP complex and induces the exchange of GDP to GTP. It remains bound to the aminoacyl-tRNA.EF-Tu.GTP complex up to the GTP hydrolysis stage on the ribosome. The polypeptide is Elongation factor Ts (Rhizobium johnstonii (strain DSM 114642 / LMG 32736 / 3841) (Rhizobium leguminosarum bv. viciae)).